Reading from the N-terminus, the 154-residue chain is Transcription antitermination protein NusB (154 aa).

Belongs to the NusB family.

Functionally, involved in transcription antitermination. Required for transcription of ribosomal RNA (rRNA) genes. Binds specifically to the boxA antiterminator sequence of the ribosomal RNA (rrn) operons. This Hyphomonas neptunium (strain ATCC 15444) protein is Transcription antitermination protein NusB.